A 327-amino-acid chain; its full sequence is Gonadotropin-releasing hormone receptor (327 aa).

The Extracellular segment spans residues 1 to 37; sequence MASASPEQNQNHCSAVNNSNMLMQGNLPTLTLSGKIR. An N-linked (GlcNAc...) asparagine glycan is attached at Asn17. The helical transmembrane segment at 38–57 threads the bilayer; it reads VTVTFFLFLLSTIFNASFLL. Residues 58 to 76 lie on the Cytoplasmic side of the membrane; that stretch reads KLQKWTQKKEKGKKLSRMK. Residues 77–96 traverse the membrane as a helical segment; that stretch reads VLLKHLTLANLLETLIVMPL. Topologically, residues 97-114 are extracellular; it reads DGMWNITVQWYAGEFLCK. Asn101 carries an N-linked (GlcNAc...) asparagine glycan. An intrachain disulfide couples Cys113 to Cys195. Residues 115–136 form a helical membrane-spanning segment; that stretch reads VLSYLKLFSMYAPAFMMVVISL. Residues 137 to 163 are Cytoplasmic-facing; it reads DRSLAITRPLAMKNNGKLGQSMIGLAW. A helical transmembrane segment spans residues 164–183; sequence LLSGIFAGPQLYIFRMIHLA. At 184–211 the chain is on the extracellular side; sequence DSSGQTEGFPQCVTHCSFPQWWHQAFYN. Residues 212–231 traverse the membrane as a helical segment; that stretch reads FFTFSCLFIIPLFITLICNA. The Cytoplasmic portion of the chain corresponds to 232-280; it reads KIIFTLTRVLHQDPHELQLNQSKNNIPRARLRTLKMTVAFATSFTVCWT. Residues 281 to 299 form a helical membrane-spanning segment; it reads PYYVLGIWYWFDPEMLNRV. The Extracellular portion of the chain corresponds to 300 to 305; it reads SDPVNH. A helical membrane pass occupies residues 306-325; that stretch reads FFFLFALLNPCFDPLIYGYF. Residues 326–327 are Cytoplasmic-facing; that stretch reads SL.

This sequence belongs to the G-protein coupled receptor 1 family.

It is found in the cell membrane. Functionally, receptor for gonadotropin releasing hormone (GnRH) that mediates the action of GnRH to stimulate the secretion of the gonadotropic hormones luteinizing hormone (LH) and follicle-stimulating hormone (FSH). This receptor mediates its action by association with G-proteins that activate a phosphatidylinositol-calcium second messenger system. In Canis lupus familiaris (Dog), this protein is Gonadotropin-releasing hormone receptor (GNRHR).